We begin with the raw amino-acid sequence, 270 residues long: Cyclohexanol dehydrogenase (270 aa).

Positions 19, 40, 78, 79, 105, 176, 180, 209, and 211 each coordinate NAD(+). The Proton acceptor role is filled by Tyr-176.

It belongs to the short-chain dehydrogenases/reductases (SDR) family. Homodimer.

It localises to the cytoplasm. It catalyses the reaction cyclohexanol + NAD(+) = cyclohexanone + NADH + H(+). Its activity is regulated as follows. Activity is enhanced by the addition of Ba(2+) and Mg(2+), but inhibited by the addition of Al(3+), Ca(2+), Co(2+), Cu(2+), Mn(2+) and Zn(2+). Functionally, catalyzes the oxidation of cyclohexanol to cyclohexanone. Can also use a broad range of other alcohols, including trans-cyclohexane-1,2-diol, trans-cyclopentane-1,2-diol, cyclopentanol, hexane-1,2-diol, ethanol, 1-propanol, 1-butanol, 1-pentanol and 1-hexanol. This Rhodococcus sp. (strain TK6) protein is Cyclohexanol dehydrogenase.